A 142-amino-acid polypeptide reads, in one-letter code: Putative pre-16S rRNA nuclease (142 aa).

This sequence belongs to the YqgF nuclease family.

Its subcellular location is the cytoplasm. In terms of biological role, could be a nuclease involved in processing of the 5'-end of pre-16S rRNA. The sequence is that of Putative pre-16S rRNA nuclease from Desulfitobacterium hafniense (strain DSM 10664 / DCB-2).